The primary structure comprises 109 residues: Large ribosomal subunit protein uL22 (109 aa).

Belongs to the universal ribosomal protein uL22 family. In terms of assembly, part of the 50S ribosomal subunit.

This protein binds specifically to 23S rRNA; its binding is stimulated by other ribosomal proteins, e.g. L4, L17, and L20. It is important during the early stages of 50S assembly. It makes multiple contacts with different domains of the 23S rRNA in the assembled 50S subunit and ribosome. Functionally, the globular domain of the protein is located near the polypeptide exit tunnel on the outside of the subunit, while an extended beta-hairpin is found that lines the wall of the exit tunnel in the center of the 70S ribosome. The protein is Large ribosomal subunit protein uL22 of Paraburkholderia xenovorans (strain LB400).